Reading from the N-terminus, the 411-residue chain is Metal-binding regulatory protein cuf1 (411 aa).

Residues 1 to 40 (MVVINNVKMACMKCIRGHRSSTCKHNDRELFPIRPKGRPI) constitute a DNA-binding region (copper-fist). Zn(2+) contacts are provided by C11, C14, C23, and H25. The interval 63–92 (SRKKGSKCSTSSTTDLDSSSASNSSCSIPS) is disordered. Positions 69 to 92 (KCSTSSTTDLDSSSASNSSCSIPS) are enriched in low complexity.

The protein localises to the cytoplasm. It is found in the nucleus. Its function is as follows. Copper-sensing transcription factor that regulates iron uptake genes. Under copper starvation conditions activates the transcription of the copper transport genes, ctr4, ctr5 and ctr6. This Schizosaccharomyces pombe (strain 972 / ATCC 24843) (Fission yeast) protein is Metal-binding regulatory protein cuf1 (cuf1).